The sequence spans 349 residues: MAQVTLTAVRKVYPNGAEALEPSSFTIPDGELTVLVGPSGCGKSTLLRMVAGLEEITEGELSIGDRIVNDIDPADRNIAMVFQNYALYPHMSVAQNMGYGLKNRGMDKAAISEKVREAADMLNLNEFLDRRPSQLSGGQRQRVAMGRAIVREPDLFLFDEPLSNLDAKLRNQMRIEIRALQRRLGTTAMYVTHDQVEAMTMADRIIVLNSGMIEQIGTPNEIYEHPASTFVASFMGAPPMNLLRGEASGGAVTLGGGQDVPFARADGHDGPIQVGIRPEDTWPDPAGDLAFDVDIIEELGAQRLLHGHVAGQAFSVAVPKDKSAETGAMKLSVKPGAVHLFDADKGRRL.

Residues 4–235 form the ABC transporter domain; it reads VTLTAVRKVY…PASTFVASFM (232 aa). An ATP-binding site is contributed by 37-44; that stretch reads GPSGCGKS.

It belongs to the ABC transporter superfamily. sn-glycerol-3-phosphate importer (TC 3.A.1.1.3) family. As to quaternary structure, the complex is composed of two ATP-binding proteins (UgpC), two transmembrane proteins (UgpA and UgpE) and a solute-binding protein (UgpB).

The protein localises to the cell inner membrane. The catalysed reaction is sn-glycerol 3-phosphate(out) + ATP + H2O = sn-glycerol 3-phosphate(in) + ADP + phosphate + H(+). Part of the ABC transporter complex UgpBAEC involved in sn-glycerol-3-phosphate (G3P) import. Responsible for energy coupling to the transport system. The protein is sn-glycerol-3-phosphate import ATP-binding protein UgpC of Jannaschia sp. (strain CCS1).